Here is a 231-residue protein sequence, read N- to C-terminus: Protein HHL1, chloroplastic (231 aa).

The N-terminal 39 residues, 1-39 (MEVSMSLNALTRLPLKNTGRFEEVGLARHSLFSSRTACR), are a transit peptide targeting the chloroplast. The chain crosses the membrane as a helical span at residues 93–113 (YLWYPLSIIAGGTTAKIMVAA). Positions 206–231 (SFGKLSSLNPGSDEKTEETSDEKAKA) are disordered. The span at 217–231 (SDEKTEETSDEKAKA) shows a compositional bias: basic and acidic residues.

Interacts with psbB, psbC and LQY1, but not with psbA or psbD.

The protein resides in the plastid. Its subcellular location is the chloroplast thylakoid membrane. Functionally, involved in photoprotection. Forms a complex with LQY1 that is involved in the repair and reassembly cycle of the PSII-LHCII supercomplex under high-light conditions. May function in guiding the release of psbC from PSII core monomers. This is Protein HHL1, chloroplastic from Arabidopsis thaliana (Mouse-ear cress).